Here is a 144-residue protein sequence, read N- to C-terminus: 3-hydroxyacyl-[acyl-carrier-protein] dehydratase FabZ (144 aa).

Histidine 48 is a catalytic residue.

The protein belongs to the thioester dehydratase family. FabZ subfamily.

It localises to the cytoplasm. The catalysed reaction is a (3R)-hydroxyacyl-[ACP] = a (2E)-enoyl-[ACP] + H2O. Involved in unsaturated fatty acids biosynthesis. Catalyzes the dehydration of short chain beta-hydroxyacyl-ACPs and long chain saturated and unsaturated beta-hydroxyacyl-ACPs. This is 3-hydroxyacyl-[acyl-carrier-protein] dehydratase FabZ from Listeria monocytogenes serotype 4b (strain CLIP80459).